A 561-amino-acid chain; its full sequence is Arginine--tRNA ligase (561 aa).

Residues Ala-128–His-138 carry the 'HIGH' region motif.

The protein belongs to the class-I aminoacyl-tRNA synthetase family. In terms of assembly, monomer.

The protein localises to the cytoplasm. It catalyses the reaction tRNA(Arg) + L-arginine + ATP = L-arginyl-tRNA(Arg) + AMP + diphosphate. This Chromohalobacter salexigens (strain ATCC BAA-138 / DSM 3043 / CIP 106854 / NCIMB 13768 / 1H11) protein is Arginine--tRNA ligase.